The chain runs to 333 residues: Fructose-1,6-bisphosphatase class 1 (333 aa).

Residues Glu-90, Asp-112, Leu-114, and Asp-115 each contribute to the Mg(2+) site. Substrate contacts are provided by residues 115–118 (DGSS), Asn-207, and Lys-273. Glu-279 provides a ligand contact to Mg(2+).

It belongs to the FBPase class 1 family. Homotetramer. The cofactor is Mg(2+).

It localises to the cytoplasm. It carries out the reaction beta-D-fructose 1,6-bisphosphate + H2O = beta-D-fructose 6-phosphate + phosphate. It functions in the pathway carbohydrate biosynthesis; gluconeogenesis. This is Fructose-1,6-bisphosphatase class 1 from Azoarcus sp. (strain BH72).